A 463-amino-acid chain; its full sequence is ATP-dependent protease ATPase subunit HslU (463 aa).

ATP-binding positions include Ile19, 61–66 (GVGKTE), Asp277, Glu341, and Arg413.

Belongs to the ClpX chaperone family. HslU subfamily. A double ring-shaped homohexamer of HslV is capped on each side by a ring-shaped HslU homohexamer. The assembly of the HslU/HslV complex is dependent on binding of ATP.

Its subcellular location is the cytoplasm. Functionally, ATPase subunit of a proteasome-like degradation complex; this subunit has chaperone activity. The binding of ATP and its subsequent hydrolysis by HslU are essential for unfolding of protein substrates subsequently hydrolyzed by HslV. HslU recognizes the N-terminal part of its protein substrates and unfolds these before they are guided to HslV for hydrolysis. The protein is ATP-dependent protease ATPase subunit HslU of Bacillus cereus (strain AH187).